Here is a 409-residue protein sequence, read N- to C-terminus: Elongation factor Tu (409 aa).

The tr-type G domain maps to 10 to 214 (KPHVNIGTIG…EVDAYIPEPE (205 aa)). The segment at 19 to 26 (GHVDHGKT) is G1. 19-26 (GHVDHGKT) is a GTP binding site. Mg(2+) is bound at residue threonine 26. Residues 60–64 (GITIN) form a G2 region. The G3 stretch occupies residues 81–84 (DCPG). Residues 81-85 (DCPGH) and 136-139 (NKQD) each bind GTP. A G4 region spans residues 136–139 (NKQD). A G5 region spans residues 174-176 (SAL).

This sequence belongs to the TRAFAC class translation factor GTPase superfamily. Classic translation factor GTPase family. EF-Tu/EF-1A subfamily. As to quaternary structure, monomer.

It is found in the cytoplasm. It carries out the reaction GTP + H2O = GDP + phosphate + H(+). GTP hydrolase that promotes the GTP-dependent binding of aminoacyl-tRNA to the A-site of ribosomes during protein biosynthesis. This is Elongation factor Tu from Rippkaea orientalis (strain PCC 8801 / RF-1) (Cyanothece sp. (strain PCC 8801)).